The sequence spans 385 residues: Rhomboid domain-containing protein 3 (385 aa).

The next 5 membrane-spanning stretches (helical) occupy residues 13 to 33, 58 to 78, 95 to 115, 146 to 166, and 168 to 188; these read ALPLASSVLMLLLSCLWLLGA, LGHTALPGLLLSLLLLPTLGW, VLALATGLLAVLLAGLGVSGA, WLLPWLLLALTLLLSSEPPFL, and LLCGLLTGLAYAAGAFQWLEL. The interval 238–264 is disordered; that stretch reads PPYLASSDSWPHSDGSAQLPPRLGPGQ. Residues 322 to 361 enclose the UBA domain; it reads SVSSLRLQQLQHMGFPTEQAAVALAATGRVEGAVSLLVEG.

It localises to the membrane. This Mus musculus (Mouse) protein is Rhomboid domain-containing protein 3 (Rhbdd3).